The chain runs to 194 residues: Peptidyl-tRNA hydrolase (194 aa).

Residue Tyr16 participates in tRNA binding. His21 functions as the Proton acceptor in the catalytic mechanism. TRNA-binding residues include Phe67, Asn69, and Asn115.

This sequence belongs to the PTH family. In terms of assembly, monomer.

The protein resides in the cytoplasm. The catalysed reaction is an N-acyl-L-alpha-aminoacyl-tRNA + H2O = an N-acyl-L-amino acid + a tRNA + H(+). Hydrolyzes ribosome-free peptidyl-tRNAs (with 1 or more amino acids incorporated), which drop off the ribosome during protein synthesis, or as a result of ribosome stalling. Functionally, catalyzes the release of premature peptidyl moieties from peptidyl-tRNA molecules trapped in stalled 50S ribosomal subunits, and thus maintains levels of free tRNAs and 50S ribosomes. The polypeptide is Peptidyl-tRNA hydrolase (Klebsiella pneumoniae (strain 342)).